A 989-amino-acid chain; its full sequence is ATP-dependent 6-phosphofructokinase subunit alpha (989 aa).

An N-terminal catalytic PFK domain 1 region spans residues 1–585 (MPEPSISALS…SYESFLSVSK (585 aa)). ATP contacts are provided by residues glycine 220, 283–284 (RS), and 313–316 (GDGS). Mg(2+) is bound at residue aspartate 314. Beta-D-fructose 6-phosphate contacts are provided by residues 359 to 361 (SID), arginine 396, 403 to 405 (MGR), glutamate 460, arginine 487, and 493 to 496 (HVQR). The active-site Proton acceptor is the aspartate 361. The interval 586-599 (YDDGSYLVPESSRL) is interdomain linker. A C-terminal regulatory PFK domain 2 region spans residues 600-989 (NIAIIHVGAP…LSGRLSIRTT (390 aa)). Beta-D-fructose 2,6-bisphosphate is bound by residues arginine 670, 727–731 (TVSNN), arginine 765, 772–774 (QGG), glutamate 832, arginine 858, 864–867 (HVQQ), and arginine 963.

Belongs to the phosphofructokinase type A (PFKA) family. ATP-dependent PFK group I subfamily. Eukaryotic two domain clade 'E' sub-subfamily. In terms of assembly, heterododecamer of 4 alpha, 4 beta and 4 gamma chains. The gamma chain bridges the N-terminal halves of the alpha and beta subunits. Mg(2+) serves as cofactor.

Its subcellular location is the cytoplasm. It carries out the reaction beta-D-fructose 6-phosphate + ATP = beta-D-fructose 1,6-bisphosphate + ADP + H(+). The protein operates within carbohydrate degradation; glycolysis; D-glyceraldehyde 3-phosphate and glycerone phosphate from D-glucose: step 3/4. Its activity is regulated as follows. Allosterically activated by ADP, AMP, or fructose 2,6-bisphosphate, and allosterically inhibited by ATP or citrate. In terms of biological role, catalyzes the phosphorylation of D-fructose 6-phosphate to fructose 1,6-bisphosphate by ATP, the first committing step of glycolysis. Involved in the modulation of glucose-induced microautophagy of peroxisomes independent of its ability to metabolize glucose intermediates. This chain is ATP-dependent 6-phosphofructokinase subunit alpha (PFK1), found in Komagataella phaffii (strain GS115 / ATCC 20864) (Yeast).